We begin with the raw amino-acid sequence, 233 residues long: Peptidyl-tRNA hydrolase (233 aa).

Tyrosine 14 serves as a coordination point for tRNA. Histidine 19 acts as the Proton acceptor in catalysis. TRNA-binding residues include phenylalanine 64, asparagine 66, and asparagine 112. The segment at 187–233 (VSPRRSGTGQKGKDKPPAPAKQQATATKAEPEPDTRSALQKLMERFK) is disordered.

It belongs to the PTH family. In terms of assembly, monomer.

It is found in the cytoplasm. It catalyses the reaction an N-acyl-L-alpha-aminoacyl-tRNA + H2O = an N-acyl-L-amino acid + a tRNA + H(+). Its function is as follows. Hydrolyzes ribosome-free peptidyl-tRNAs (with 1 or more amino acids incorporated), which drop off the ribosome during protein synthesis, or as a result of ribosome stalling. Catalyzes the release of premature peptidyl moieties from peptidyl-tRNA molecules trapped in stalled 50S ribosomal subunits, and thus maintains levels of free tRNAs and 50S ribosomes. The chain is Peptidyl-tRNA hydrolase from Roseobacter denitrificans (strain ATCC 33942 / OCh 114) (Erythrobacter sp. (strain OCh 114)).